The chain runs to 490 residues: CUGBP Elav-like family member 1 (490 aa).

2 RRM domains span residues Ile-16–Ser-99 and Arg-108–Thr-188. The disordered stretch occupies residues Pro-283–Ser-312. The RRM 3 domain occupies Ala-405–Ser-483.

It belongs to the CELF/BRUNOL family. Oligomer. Oligomerization is required for RNA-binding and EDEN-dependent deadenylation. In terms of processing, phosphorylated during oocyte maturation and dephosphorylated following egg activation. Dephosphorylation is calcium dependent and correlates with the increase in the activity of EDEN-dependent deadenylation.

The protein localises to the nucleus. Its subcellular location is the cytoplasm. Functionally, RNA-binding protein implicated in the regulation of several post-transcriptional events. May be involved in pre-mRNA alternative splicing, mRNA translation activation and stability. Mediates the rapid and sequence-specific cytoplasmic deadenylation of EDEN-containing maternal mRNAs following fertilization. Binds to AU-rich sequences (AREs) of jun mRNA. Binds to the embryonic deadenylation element (EDEN) motif localized in the 3'-UTR of maternal mRNAs. Binds to RNA containing several repeats of the consensus sequence 5'-UGU-3'. EDEN-dependent deadenylation is enhanced by the presence of an additional cis element composed of three AUU repeats. This chain is CUGBP Elav-like family member 1 (celf1), found in Xenopus tropicalis (Western clawed frog).